The chain runs to 343 residues: tRNA N6-adenosine threonylcarbamoyltransferase (343 aa).

The Fe cation site is built by His-116 and His-120. Residues 139–143, Asp-172, Gly-185, Asp-189, and Asn-280 contribute to the substrate site; that span reads TVSGG. Residue Asp-308 coordinates Fe cation.

Belongs to the KAE1 / TsaD family. Requires Fe(2+) as cofactor.

Its subcellular location is the cytoplasm. It catalyses the reaction L-threonylcarbamoyladenylate + adenosine(37) in tRNA = N(6)-L-threonylcarbamoyladenosine(37) in tRNA + AMP + H(+). In terms of biological role, required for the formation of a threonylcarbamoyl group on adenosine at position 37 (t(6)A37) in tRNAs that read codons beginning with adenine. Is involved in the transfer of the threonylcarbamoyl moiety of threonylcarbamoyl-AMP (TC-AMP) to the N6 group of A37, together with TsaE and TsaB. TsaD likely plays a direct catalytic role in this reaction. The protein is tRNA N6-adenosine threonylcarbamoyltransferase of Cytophaga hutchinsonii (strain ATCC 33406 / DSM 1761 / CIP 103989 / NBRC 15051 / NCIMB 9469 / D465).